The sequence spans 170 residues: 3-isopropylmalate dehydratase small subunit 1 (170 aa).

Belongs to the LeuD family. LeuD type 2 subfamily. In terms of assembly, heterodimer of LeuC and LeuD.

The enzyme catalyses (2R,3S)-3-isopropylmalate = (2S)-2-isopropylmalate. It functions in the pathway amino-acid biosynthesis; L-leucine biosynthesis; L-leucine from 3-methyl-2-oxobutanoate: step 2/4. In terms of biological role, catalyzes the isomerization between 2-isopropylmalate and 3-isopropylmalate, via the formation of 2-isopropylmaleate. The sequence is that of 3-isopropylmalate dehydratase small subunit 1 (leuD1) from Methanopyrus kandleri (strain AV19 / DSM 6324 / JCM 9639 / NBRC 100938).